Reading from the N-terminus, the 334-residue chain is Glycerol-3-phosphate dehydrogenase [NAD(P)+] (334 aa).

NADPH-binding residues include tryptophan 13, arginine 33, and lysine 106. Sn-glycerol 3-phosphate contacts are provided by lysine 106, glycine 137, and serine 139. Residue alanine 141 participates in NADPH binding. Positions 192, 245, 255, 256, and 257 each coordinate sn-glycerol 3-phosphate. Lysine 192 serves as the catalytic Proton acceptor. Arginine 256 serves as a coordination point for NADPH. Positions 280 and 282 each coordinate NADPH.

This sequence belongs to the NAD-dependent glycerol-3-phosphate dehydrogenase family.

It is found in the cytoplasm. The enzyme catalyses sn-glycerol 3-phosphate + NAD(+) = dihydroxyacetone phosphate + NADH + H(+). It carries out the reaction sn-glycerol 3-phosphate + NADP(+) = dihydroxyacetone phosphate + NADPH + H(+). It participates in membrane lipid metabolism; glycerophospholipid metabolism. Catalyzes the reduction of the glycolytic intermediate dihydroxyacetone phosphate (DHAP) to sn-glycerol 3-phosphate (G3P), the key precursor for phospholipid synthesis. The chain is Glycerol-3-phosphate dehydrogenase [NAD(P)+] from Chlamydia trachomatis serovar L2 (strain ATCC VR-902B / DSM 19102 / 434/Bu).